The following is a 130-amino-acid chain: MASLPHPKIVKKHTKKFKRHHSDRYHRVAENWRKQKGIDSVVRRRFRGNISQPKIGYGSNKKTKFLSPSGHKTFLVANVKDLETLTMHTKTYAAEIAHNISAKNRVVILARAKALGIKVTNPKGRLALEA.

The residue at position 40 (Ser40) is a Phosphoserine.

Belongs to the eukaryotic ribosomal protein eL32 family. As to quaternary structure, component of the large ribosomal subunit (LSU). Mature yeast ribosomes consist of a small (40S) and a large (60S) subunit. The 40S small subunit contains 1 molecule of ribosomal RNA (18S rRNA) and 33 different proteins (encoded by 57 genes). The large 60S subunit contains 3 rRNA molecules (25S, 5.8S and 5S rRNA) and 46 different proteins (encoded by 81 genes).

The protein localises to the cytoplasm. Its function is as follows. Component of the ribosome, a large ribonucleoprotein complex responsible for the synthesis of proteins in the cell. The small ribosomal subunit (SSU) binds messenger RNAs (mRNAs) and translates the encoded message by selecting cognate aminoacyl-transfer RNA (tRNA) molecules. The large subunit (LSU) contains the ribosomal catalytic site termed the peptidyl transferase center (PTC), which catalyzes the formation of peptide bonds, thereby polymerizing the amino acids delivered by tRNAs into a polypeptide chain. The nascent polypeptides leave the ribosome through a tunnel in the LSU and interact with protein factors that function in enzymatic processing, targeting, and the membrane insertion of nascent chains at the exit of the ribosomal tunnel. The sequence is that of Large ribosomal subunit protein eL32 from Saccharomyces cerevisiae (strain ATCC 204508 / S288c) (Baker's yeast).